We begin with the raw amino-acid sequence, 322 residues long: Dirigent protein 9 (322 aa).

Positions 1-20 (MAKALHITIFLFLISSNLLA) are cleaved as a signal peptide.

Belongs to the plant dirigent protein family. In terms of assembly, homodimer.

It localises to the secreted. It is found in the extracellular space. The protein localises to the apoplast. Dirigent proteins impart stereoselectivity on the phenoxy radical-coupling reaction, yielding optically active lignans from two molecules of coniferyl alcohol in the biosynthesis of lignans, flavonolignans, and alkaloids and thus plays a central role in plant secondary metabolism. In Arabidopsis thaliana (Mouse-ear cress), this protein is Dirigent protein 9 (DIR9).